The chain runs to 1712 residues: Neurexin-2 (1712 aa).

Residues 1–28 form the signal peptide; that stretch reads MASGSRWRPTPPPLLLLLLLALAARADG. A Laminin G-like 1 domain is found at 29–206; the sequence is LEFGGGPGQW…LRGATADPLC (178 aa). The Extracellular portion of the chain corresponds to 29-1636; it reads LEFGGGPGQW…EVIRESSSTT (1608 aa). Residue Asn60 is glycosylated (N-linked (GlcNAc...) asparagine). In terms of domain architecture, EGF-like 1 spans 202-242; that stretch reads ADPLCAPARNPCANGGLCTVLAPGEVGCDCSHTGFGGKFCS. Disulfide bonds link Cys206–Cys219, Cys213–Cys229, and Cys231–Cys241. 2 consecutive Laminin G-like domains span residues 289 to 486 and 493 to 686; these read VATF…SFRC and DPVT…APFC. Residue Asp335 participates in Ca(2+) binding. The N-linked (GlcNAc...) asparagine glycan is linked to Asn338. Positions 352 and 420 each coordinate Ca(2+). Intrachain disulfides connect Cys450-Cys486, Cys657-Cys686, Cys694-Cys705, Cys699-Cys714, and Cys716-Cys726. The 38-residue stretch at 690–727 folds into the EGF-like 2 domain; that stretch reads TLKQCASAPCRNGGVCREGWNRFICDCIGTGFLGRVCE. Laminin G-like domains are found at residues 732–904 and 918–1093; these read VLSY…ITYC and DPVT…ERGC. Asp779 and Leu796 together coordinate Ca(2+). Asn841 carries an N-linked (GlcNAc...) asparagine glycan. Ca(2+) is bound at residue Arg854. Cystine bridges form between Cys1065–Cys1093, Cys1100–Cys1111, Cys1105–Cys1120, and Cys1122–Cys1132. In terms of domain architecture, EGF-like 3 spans 1096-1133; that stretch reads PSTTCTEESCANQGVCLQQWDGFTCDCTMTSYGGPVCN. The Laminin G-like 6 domain occupies 1137–1345; the sequence is TTYIFGKGGA…HLRLVGEGPS (209 aa). Residues Asp1189 and Val1206 each contribute to the Ca(2+) site. Residue Asn1236 is glycosylated (N-linked (GlcNAc...) asparagine). The Ca(2+) site is built by Ile1288 and Asn1290. The interval 1373-1392 is disordered; the sequence is ATTTTRRGRSPTLRDSTTQN. Ser1400 is a glycosylation site (O-linked (Xyl...) (heparan sulfate) serine). Disordered regions lie at residues 1458–1489 and 1525–1626; these read ATQD…CEEP and TLLS…PGAV. The chain crosses the membrane as a helical span at residues 1637-1657; the sequence is GMVVGIVAAAALCILILLYAM. Over 1658–1712 the chain is Cytoplasmic; it reads YKYRNRDEGSYQVDQSRNYISNSAQSNGAVVKEKAPAAPKTPSKAKKNKDKEYYV. The segment at 1679–1712 is disordered; the sequence is NSAQSNGAVVKEKAPAAPKTPSKAKKNKDKEYYV.

Belongs to the neurexin family. As to quaternary structure, the laminin G-like domain 1 binds to NXPH1. Interacts with PATJ. Interacts with CBLN1, CBLN2 and, less avidly, with CBLN4. Specific isoforms bind neuroligins NLGN1, NLGN2 and NLGN3. Specific isoforms bind to alpha-dystroglycan. Interacts (via Laminin G-like 1 domain) with IGSF21 (Ig-like 1 domain) in a trans-interaction manner. Interacts with CLSTN3. Post-translationally, O-glycosylated; contains heparan sulfate. Heparan sulfate attachment is required for synapse development by mediating interactions with neuroligins. As to expression, predominantly expressed in brain.

Its subcellular location is the presynaptic cell membrane. In terms of biological role, neuronal cell surface protein that may be involved in cell recognition and cell adhesion. May mediate intracellular signaling. The protein is Neurexin-2 (NRXN2) of Homo sapiens (Human).